The sequence spans 347 residues: Anthranilate phosphoribosyltransferase (347 aa).

5-phospho-alpha-D-ribose 1-diphosphate is bound by residues G88, G91–D92, T96, N98–T101, K116–S124, and S128. G88 lines the anthranilate pocket. S100 contacts Mg(2+). N119 provides a ligand contact to anthranilate. Residue R174 participates in anthranilate binding. Mg(2+) contacts are provided by D232 and E233.

It belongs to the anthranilate phosphoribosyltransferase family. In terms of assembly, homodimer. Mg(2+) is required as a cofactor.

The catalysed reaction is N-(5-phospho-beta-D-ribosyl)anthranilate + diphosphate = 5-phospho-alpha-D-ribose 1-diphosphate + anthranilate. The protein operates within amino-acid biosynthesis; L-tryptophan biosynthesis; L-tryptophan from chorismate: step 2/5. In terms of biological role, catalyzes the transfer of the phosphoribosyl group of 5-phosphorylribose-1-pyrophosphate (PRPP) to anthranilate to yield N-(5'-phosphoribosyl)-anthranilate (PRA). In Shewanella sp. (strain MR-7), this protein is Anthranilate phosphoribosyltransferase.